The chain runs to 336 residues: Glycerol-3-phosphate dehydrogenase [NAD(P)+] (336 aa).

Positions 16, 17, 37, and 111 each coordinate NADPH. Residues lysine 111, glycine 140, and threonine 142 each contribute to the sn-glycerol 3-phosphate site. Alanine 144 is an NADPH binding site. Sn-glycerol 3-phosphate-binding residues include lysine 196, aspartate 249, serine 259, arginine 260, and asparagine 261. Lysine 196 acts as the Proton acceptor in catalysis. Arginine 260 is a binding site for NADPH. The NADPH site is built by valine 284 and glutamate 286.

It belongs to the NAD-dependent glycerol-3-phosphate dehydrogenase family.

The protein resides in the cytoplasm. The enzyme catalyses sn-glycerol 3-phosphate + NAD(+) = dihydroxyacetone phosphate + NADH + H(+). It carries out the reaction sn-glycerol 3-phosphate + NADP(+) = dihydroxyacetone phosphate + NADPH + H(+). Its pathway is membrane lipid metabolism; glycerophospholipid metabolism. Catalyzes the reduction of the glycolytic intermediate dihydroxyacetone phosphate (DHAP) to sn-glycerol 3-phosphate (G3P), the key precursor for phospholipid synthesis. This is Glycerol-3-phosphate dehydrogenase [NAD(P)+] from Actinobacillus pleuropneumoniae serotype 5b (strain L20).